A 332-amino-acid chain; its full sequence is Fructose-1,6-bisphosphatase class 1 (332 aa).

Mg(2+)-binding residues include glutamate 89, aspartate 110, leucine 112, and aspartate 113. Substrate contacts are provided by residues aspartate 113–serine 116, asparagine 206, tyrosine 239, tyrosine 257–tyrosine 259, and lysine 269. Glutamate 275 contributes to the Mg(2+) binding site.

The protein belongs to the FBPase class 1 family. In terms of assembly, homotetramer. Requires Mg(2+) as cofactor.

It localises to the cytoplasm. The enzyme catalyses beta-D-fructose 1,6-bisphosphate + H2O = beta-D-fructose 6-phosphate + phosphate. It functions in the pathway carbohydrate biosynthesis; gluconeogenesis. In Salmonella arizonae (strain ATCC BAA-731 / CDC346-86 / RSK2980), this protein is Fructose-1,6-bisphosphatase class 1.